The chain runs to 468 residues: Procollagen C-endopeptidase enhancer 1 (468 aa).

An N-terminal signal peptide occupies residues 1–24 (MLPAALTSLLGPFLLAWVLPLARG). N-linked (GlcNAc...) asparagine glycosylation is present at asparagine 28. Cystine bridges form between cysteine 36/cysteine 62, cysteine 89/cysteine 111, cysteine 158/cysteine 185, and cysteine 212/cysteine 235. CUB domains lie at 36–148 (CGGD…YSGR) and 158–272 (CGGR…YRTL). Phosphothreonine is present on threonine 41. Serine 49 is subject to Phosphoserine. The tract at residues 271-341 (TLPRDAVEKE…VAPDAPSITC (71 aa)) is disordered. Over residues 272-281 (LPRDAVEKES) the composition is skewed to basic and acidic residues. 2 disulfides stabilise this stretch: cysteine 341–cysteine 409 and cysteine 356–cysteine 460. The NTR domain occupies 341–460 (CPKQYKRSGT…ILSNLSKRKC (120 aa)). The N-linked (GlcNAc...) asparagine glycan is linked to asparagine 454.

As to quaternary structure, interacts with EFEMP2. In terms of tissue distribution, expressed at highest levels in collagen-rich tissues, especially tendon. Also expressed in cornea and sterna.

It is found in the secreted. Functionally, binds to the C-terminal propeptide of type I procollagen and enhances procollagen C-proteinase activity. The sequence is that of Procollagen C-endopeptidase enhancer 1 (Pcolce) from Rattus norvegicus (Rat).